The sequence spans 107 residues: U1-lycotoxin-Ls1b (107 aa).

The first 20 residues, Met1–Ser20, serve as a signal peptide directing secretion. The propeptide occupies Glu21–Arg41. 4 cysteine pairs are disulfide-bonded: Cys44–Cys59, Cys51–Cys68, Cys58–Cys86, and Cys70–Cys84.

This sequence belongs to the neurotoxin 19 (CSTX) family. 04 (U1-Lctx) subfamily. In terms of tissue distribution, expressed by the venom gland.

The protein resides in the secreted. The protein is U1-lycotoxin-Ls1b of Lycosa singoriensis (Wolf spider).